The chain runs to 86 residues: Apolipoprotein C-I (86 aa).

The N-terminal stretch at 1–26 (MRLFLSLPVLVVALLMILEGPGPAQG) is a signal peptide.

It belongs to the apolipoprotein C1 family.

The protein resides in the secreted. Functionally, inhibitor of lipoprotein binding to the low density lipoprotein (LDL) receptor, LDL receptor-related protein, and very low density lipoprotein (VLDL) receptor. Associates with high density lipoproteins (HDL) and the triacylglycerol-rich lipoproteins in the plasma and makes up about 10% of the protein of the VLDL and 2% of that of HDL. Appears to interfere directly with fatty acid uptake and is also the major plasma inhibitor of cholesteryl ester transfer protein (CETP). Binds free fatty acids and reduces their intracellular esterification. Modulates the interaction of APOE with beta-migrating VLDL and inhibits binding of beta-VLDL to the LDL receptor-related protein. This is Apolipoprotein C-I (APOC1) from Aotus nancymaae (Ma's night monkey).